A 330-amino-acid polypeptide reads, in one-letter code: Aspartate--ammonia ligase (330 aa).

It belongs to the class-II aminoacyl-tRNA synthetase family. AsnA subfamily.

The protein localises to the cytoplasm. The enzyme catalyses L-aspartate + NH4(+) + ATP = L-asparagine + AMP + diphosphate + H(+). Its pathway is amino-acid biosynthesis; L-asparagine biosynthesis; L-asparagine from L-aspartate (ammonia route): step 1/1. This is Aspartate--ammonia ligase from Streptococcus agalactiae serotype III (strain NEM316).